We begin with the raw amino-acid sequence, 211 residues long: ATP phosphoribosyltransferase (211 aa).

This sequence belongs to the ATP phosphoribosyltransferase family. Short subfamily. Heteromultimer composed of HisG and HisZ subunits.

Its subcellular location is the cytoplasm. The enzyme catalyses 1-(5-phospho-beta-D-ribosyl)-ATP + diphosphate = 5-phospho-alpha-D-ribose 1-diphosphate + ATP. Its pathway is amino-acid biosynthesis; L-histidine biosynthesis; L-histidine from 5-phospho-alpha-D-ribose 1-diphosphate: step 1/9. In terms of biological role, catalyzes the condensation of ATP and 5-phosphoribose 1-diphosphate to form N'-(5'-phosphoribosyl)-ATP (PR-ATP). Has a crucial role in the pathway because the rate of histidine biosynthesis seems to be controlled primarily by regulation of HisG enzymatic activity. This chain is ATP phosphoribosyltransferase, found in Bacillus cereus (strain B4264).